Consider the following 284-residue polypeptide: Tryptophan synthase alpha chain (284 aa).

Residues E55 and D66 each act as proton acceptor in the active site.

This sequence belongs to the TrpA family. In terms of assembly, tetramer of two alpha and two beta chains.

It carries out the reaction (1S,2R)-1-C-(indol-3-yl)glycerol 3-phosphate + L-serine = D-glyceraldehyde 3-phosphate + L-tryptophan + H2O. The protein operates within amino-acid biosynthesis; L-tryptophan biosynthesis; L-tryptophan from chorismate: step 5/5. In terms of biological role, the alpha subunit is responsible for the aldol cleavage of indoleglycerol phosphate to indole and glyceraldehyde 3-phosphate. This Methanococcus voltae protein is Tryptophan synthase alpha chain.